Consider the following 779-residue polypeptide: Polyribonucleotide nucleotidyltransferase (779 aa).

Residues Asp-490 and Asp-496 each coordinate Mg(2+). One can recognise a KH domain in the interval 557–618 (PHILSLKINP…EAVKARIEAV (62 aa)). Residues 625-693 (GEEFEGTVVK…DRGKIDLIRP (69 aa)) enclose the S1 motif domain. A compositionally biased stretch (basic and acidic residues) spans 699–752 (VPLREPRAPRGGDRGPRRDSDRGGDRGPRREFSDRGPRPEGARSERPEGQRTER). A disordered region spans residues 699 to 779 (VPLREPRAPR…AAPVFPRRED (81 aa)). Polar residues predominate over residues 757–767 (PATQESSQSSD).

The protein belongs to the polyribonucleotide nucleotidyltransferase family. Mg(2+) is required as a cofactor.

The protein resides in the cytoplasm. The enzyme catalyses RNA(n+1) + phosphate = RNA(n) + a ribonucleoside 5'-diphosphate. Its function is as follows. Involved in mRNA degradation. Catalyzes the phosphorolysis of single-stranded polyribonucleotides processively in the 3'- to 5'-direction. In Deinococcus radiodurans (strain ATCC 13939 / DSM 20539 / JCM 16871 / CCUG 27074 / LMG 4051 / NBRC 15346 / NCIMB 9279 / VKM B-1422 / R1), this protein is Polyribonucleotide nucleotidyltransferase.